The following is a 641-amino-acid chain: Uromodulin (641 aa).

An N-terminal signal peptide occupies residues 1–24; the sequence is MGQPPLTWMLMVVVASWFITTAAT. Asn-25 carries N-linked (GlcNAc...) asparagine glycosylation. Positions 28–64 constitute an EGF-like 1 domain; it reads EARWCSECHSNATCTEDEAVTTCTCQEGFTGDGLTCV. Intrachain disulfides connect Cys-32–Cys-41, Cys-35–Cys-50, Cys-52–Cys-63, Cys-69–Cys-83, Cys-77–Cys-92, Cys-94–Cys-106, Cys-112–Cys-126, Cys-120–Cys-135, Cys-137–Cys-148, Cys-150–Cys-161, Cys-155–Cys-170, Cys-174–Cys-267, Cys-195–Cys-282, Cys-217–Cys-255, Cys-223–Cys-287, Cys-248–Cys-256, Cys-297–Cys-306, Cys-300–Cys-315, Cys-317–Cys-347, Cys-335–Cys-425, and Cys-366–Cys-389. Residues 65 to 107 enclose the EGF-like 2; calcium-binding domain; it reads DLDECAIPGAHNCSANSSCVNTPGSFSCVCPEGFRLSPGLGCT. Asn-76 carries N-linked (GlcNAc...) asparagine glycosylation. Residues 108-149 form the EGF-like 3; calcium-binding domain; it reads DVDECAEPGLSHCHALATCVNVVGNYLCVCPAGYRGDGWHCE. The segment at 150–171 is beta hairpin; it reads CSPGSCGPGLDCVPEGDALVCA. Residues 172–291 are D10C; the sequence is DPCQAHRTLD…CHLAYCTDPS (120 aa). An N-linked (GlcNAc...) asparagine glycan is attached at Asn-232. Asn-275 is a glycosylation site (N-linked (GlcNAc...) asparagine). The 32-residue stretch at 292 to 323 folds into the EGF-like 4 domain; that stretch reads SVEGTCEECSIDEDCKSDNGRWHCQCKQDFNI. An N-linked (GlcNAc...) asparagine glycan is attached at Asn-322. The tract at residues 334 to 429 is ZP-N; the sequence is ECGANDMKVS…KINFACSYPL (96 aa). The ZP domain occupies 334 to 589; the sequence is ECGANDMKVS…PTCSGTRFRS (256 aa). A flexible ZP-N/ZP-C linker; important for secretion and polymerization into filaments region spans residues 430-453; sequence DMKVSLKTSLQPVVSALNITVGGT. Asn-447 carries N-linked (GlcNAc...) asparagine glycosylation. Residues 454-464 are internal hydrophobic patch (IHP); sequence GMFTVRMALFQ. The segment at 454 to 589 is ZP-C; sequence GMFTVRMALF…PTCSGTRFRS (136 aa). 3 disulfide bridges follow: Cys-506-Cys-566, Cys-527-Cys-582, and Cys-571-Cys-578. Residues 586 to 589 form an essential for cleavage by HPN region; sequence RFRS. The tract at residues 598-606 is external hydrophobic patch (EHP); regulates polymerization into filaments; sequence VLNLGPITR. Ser-614 carries GPI-anchor amidated serine lipidation. Residues 615 to 641 constitute a propeptide, removed in mature form; the sequence is RAAFSSLGLLKVWLPLLLSATLTLTFQ.

Homodimer that then polymerizes into long filaments. The filaments can additionally assemble laterally to form a sheet. The filaments consist of a zigzag-shaped backbone with laterally protruding arms which interact with bacterial adhesin fimH. Two fimH molecules can bind to a single UMOD monomer. N-glycosylated. In terms of processing, proteolytically cleaved at a conserved C-terminal proteolytic cleavage site to generate the secreted form found in urine. This cleavage is catalyzed by HPN.

The protein localises to the apical cell membrane. It localises to the basolateral cell membrane. The protein resides in the cell projection. It is found in the cilium membrane. Its subcellular location is the secreted. Its function is as follows. Functions in biogenesis and organization of the apical membrane of epithelial cells of the thick ascending limb of Henle's loop (TALH), where it promotes formation of complex filamentous gel-like structure that may play a role in the water barrier permeability. May serve as a receptor for binding and endocytosis of cytokines (IL-1, IL-2) and TNF. Facilitates neutrophil migration across renal epithelia. Functionally, in the urine, may contribute to colloid osmotic pressure, retards passage of positively charged electrolytes, and inhibits formation of liquid containing supersaturated salts and subsequent formation of salt crystals. Protects against urinary tract infections by binding to type 1 fimbriated E.coli. Binds to bacterial adhesin fimH which mediates the stable formation of bacterial aggregates, prevents the binding of E.coli to uroplakins UPK1A and UPK1B which act as urothelial receptors for type I fimbriae, and allows for pathogen clearance through micturation. Also promotes aggregation of other bacteria including K.pneumoniae, P.aeruginosa and S.mitis and so may also protect against other uropathogens. The polypeptide is Uromodulin (UMOD) (Pongo abelii (Sumatran orangutan)).